A 456-amino-acid chain; its full sequence is Putative dihydroorotase (456 aa).

Belongs to the metallo-dependent hydrolases superfamily. DHOase family. Class I DHOase subfamily.

It carries out the reaction (S)-dihydroorotate + H2O = N-carbamoyl-L-aspartate + H(+). Its pathway is pyrimidine metabolism; UMP biosynthesis via de novo pathway; (S)-dihydroorotate from bicarbonate: step 3/3. In terms of biological role, catalyzes the reversible cyclization of carbamoyl aspartate to dihydroorotate. This Rhodopirellula baltica (strain DSM 10527 / NCIMB 13988 / SH1) protein is Putative dihydroorotase.